A 467-amino-acid polypeptide reads, in one-letter code: uncharacterized protein (467 aa).

The interval 1–60 (MVRVSRGCQSCVDAKLQSTPSPSPSKSPSPTESPEQCLQKRQSGEQVVLPSRPFPRTSPR) is disordered.

Involved in osmoadaptation. This is an uncharacterized protein from Emericella nidulans (strain FGSC A4 / ATCC 38163 / CBS 112.46 / NRRL 194 / M139) (Aspergillus nidulans).